Consider the following 196-residue polypeptide: Hibernation-associated plasma protein HP-20 (196 aa).

The first 23 residues, 1-23 (MTDVWRLAIFVLMVNVLNDQVSC), serve as a signal peptide directing secretion. One can recognise a Collagen-like domain in the interval 25-63 (GPPGPVGYPGVPGVPGPRGPPGQPGAAGRPGDPGPKGPS). The segment covering 28-47 (GPVGYPGVPGVPGPRGPPGQ) has biased composition (pro residues). The segment at 28–64 (GPVGYPGVPGVPGPRGPPGQPGAAGRPGDPGPKGPSV) is disordered. The C1q domain occupies 67–196 (PCRERSAFTV…IYFSGFLISS (130 aa)).

In terms of tissue distribution, plasma; synthesized in the liver.

Its subcellular location is the secreted. Plasma proteins HP-20, HP-25, HP-27 and HP-55 form a 140 kDa complex via disulfide bonds in the plasma and are hibernation specific. The polypeptide is Hibernation-associated plasma protein HP-20 (Tamias sibiricus (Siberian chipmunk)).